Reading from the N-terminus, the 368-residue chain is Cobalt-precorrin-5B C(1)-methyltransferase (368 aa).

This sequence belongs to the CbiD family.

It catalyses the reaction Co-precorrin-5B + S-adenosyl-L-methionine = Co-precorrin-6A + S-adenosyl-L-homocysteine. The protein operates within cofactor biosynthesis; adenosylcobalamin biosynthesis; cob(II)yrinate a,c-diamide from sirohydrochlorin (anaerobic route): step 6/10. Catalyzes the methylation of C-1 in cobalt-precorrin-5B to form cobalt-precorrin-6A. This Brucella abortus (strain S19) protein is Cobalt-precorrin-5B C(1)-methyltransferase.